The sequence spans 257 residues: uncharacterized protein (257 aa).

N-linked (GlcNAc...) asparagine; by host glycans are attached at residues Asn-61, Asn-95, Asn-102, Asn-111, Asn-139, Asn-148, and Asn-152. The chain crosses the membrane as a helical span at residues 233-253 (WYIIGGIFWVIVLIILVIFII).

It is found in the host membrane. The protein resides in the virion. This is an uncharacterized protein from Acanthamoeba polyphaga (Amoeba).